We begin with the raw amino-acid sequence, 512 residues long: Dihydroniloticin synthase CYP71CD2 (512 aa).

The helical transmembrane segment at 1–21 (MNLQLDYFSITSFLVFLVVLF) threads the bilayer. Asn436 is a heme binding site.

Belongs to the cytochrome P450 family. Requires heme as cofactor. In terms of tissue distribution, mainly expressed in petioles and roots, and, to a lower extent, in leaves.

The protein localises to the membrane. The enzyme catalyses tirucalla-7,24-dien-3beta-ol + 2 reduced [NADPH--hemoprotein reductase] + 2 O2 = dihydroniloticin + 2 oxidized [NADPH--hemoprotein reductase] + 2 H2O + 2 H(+). It participates in secondary metabolite biosynthesis; terpenoid biosynthesis. Monooxygenase involved in the biosynthesis of limonoids triterpene natural products such as azadirachtin, an antifeedant widely used as bioinsecticide, and possessing many medicinal applications including anti-tumoral, anti-malarial, anti-rheumatic, antibacterial, anti-inflammatory, anti-pyretic and diuretic effects. Catalyzes the conversion of tirucalladienol to dihydroniloticin. The chain is Dihydroniloticin synthase CYP71CD2 from Melia azedarach (Chinaberry tree).